Here is a 657-residue protein sequence, read N- to C-terminus: Bifunctional lysine-specific demethylase and histidyl-hydroxylase NO66 (657 aa).

Disordered stretches follow at residues 1–141 (MQKA…QTSP) and 165–198 (KSCP…NSNE). Positions 32 to 41 (SAKTVDTVTD) are enriched in polar residues. A compositionally biased stretch (basic and acidic residues) spans 55–71 (AEKERRKYLQARVRAEG). Polar residues-rich tracts occupy residues 73–84 (SASTSSKSNATR) and 132–141 (RSQGLEQTSP). Serine 133 carries the post-translational modification Phosphoserine. Phosphothreonine is present on threonine 139. A Phosphoserine modification is found at serine 140. Positions 315–454 (NPSTYLLGLR…NLLETLMPIV (140 aa)) constitute a JmjC domain. 3 residues coordinate Fe cation: histidine 355, aspartate 357, and histidine 420.

This sequence belongs to the ROX family. NO66 subfamily. Fe(2+) is required as a cofactor.

Its subcellular location is the nucleus. The enzyme catalyses N(6),N(6)-dimethyl-L-lysyl(36)-[histone H3] + 2 2-oxoglutarate + 2 O2 = L-lysyl(36)-[histone H3] + 2 formaldehyde + 2 succinate + 2 CO2. Its function is as follows. Oxygenase that can act as both a histone lysine demethylase and a ribosomal histidine hydroxylase. Specifically demethylates 'Lys-4' (H3K4me) and 'Lys-36' (H3K36me) of histone H3, thereby playing a central role in histone code. This Drosophila erecta (Fruit fly) protein is Bifunctional lysine-specific demethylase and histidyl-hydroxylase NO66.